We begin with the raw amino-acid sequence, 414 residues long: Isocitrate dehydrogenase [NADP] cytoplasmic (414 aa).

Serine 2 carries the post-translational modification N-acetylserine. Tyrosine 42 is modified (phosphotyrosine). 75 to 77 serves as a coordination point for NADP(+); it reads TIT. Threonine 77 lines the substrate pocket. Residue lysine 81 is modified to N6-acetyllysine. Arginine 82 provides a ligand contact to NADP(+). Substrate contacts are provided by residues 94–100 and arginine 109; that span reads SPNGTIR. Residue lysine 126 is modified to N6-succinyllysine. Arginine 132 and lysine 212 together coordinate substrate. 3 positions are modified to N6-acetyllysine: lysine 224, lysine 233, and lysine 243. A Mn(2+)-binding site is contributed by aspartate 252. Lysine 260 contacts NADP(+). 2 residues coordinate Mn(2+): aspartate 275 and aspartate 279. NADP(+) is bound at residue 310-315; it reads GTVTRH. Position 321 is an N6-acetyllysine (lysine 321). NADP(+) is bound at residue asparagine 328. A Phosphoserine modification is found at serine 389. Residue lysine 400 is modified to N6-succinyllysine.

It belongs to the isocitrate and isopropylmalate dehydrogenases family. As to quaternary structure, homodimer. It depends on Mg(2+) as a cofactor. Requires Mn(2+) as cofactor. In terms of processing, acetylation at Lys-374 dramatically reduces catalytic activity.

It is found in the cytoplasm. The protein localises to the cytosol. It carries out the reaction D-threo-isocitrate + NADP(+) = 2-oxoglutarate + CO2 + NADPH. Its function is as follows. Catalyzes the NADP(+)-dependent oxidative decarboxylation of isocitrate (D-threo-isocitrate) to 2-ketoglutarate (2-oxoglutarate), which is required by other enzymes such as the phytanoyl-CoA dioxygenase. Plays a critical role in the generation of NADPH, an important cofactor in many biosynthesis pathways. May act as a corneal epithelial crystallin and may be involved in maintaining corneal epithelial transparency. This chain is Isocitrate dehydrogenase [NADP] cytoplasmic (IDH1), found in Pongo abelii (Sumatran orangutan).